A 157-amino-acid chain; its full sequence is Alpha-amylase/trypsin inhibitor RA16 (157 aa).

The N-terminal stretch at 1–26 is a signal peptide; it reads MASNKVVISALLVVVVSVLAATTTMA. 5 cysteine pairs are disulfide-bonded: Cys41-Cys89, Cys55-Cys77, Cys63-Cys121, Cys78-Cys137, and Cys91-Cys149.

This sequence belongs to the cereal trypsin/alpha-amylase inhibitor family. In terms of processing, five disulfide bonds are present.

Its subcellular location is the secreted. Seed storage protein. This Oryza sativa subsp. japonica (Rice) protein is Alpha-amylase/trypsin inhibitor RA16.